Reading from the N-terminus, the 439-residue chain is MMAASASATTMLLKYPTTVCGIPNPSSNNNNDPSNNIVSIPQNTTNPTLKSRTPNKITTNAVAAPSFPSLTTTTPSSIQSLVHEFDPQIPPEDAHTPPSSWYTEPAFYSHELERIFYKGWQVAGISDQIKEPNQYFTGSLGNVEYLVSRDGEGKVHAFHNVCTHRASILACGSGKKSCFVCPYHGWVYGMDGSLAKASKAKPEQNLDPKELGLVPLKVAVWGPFVLISLDRSLEEGGDVGTEWLGTSAEDVKAHAFDPSLQFIHRSEFPMESNWKIFSDNYLDSSYHVPYAHKYYATELNFDTYDTQMIENVTIQRVEGSSNKPDGFDRVGIQAFYAFAYPNFAVERYGPWMTTMHIHPLGPRKCKLVVDYYIENSMLDDKDYIEKGIAINDNVQREDVVLCESVQRGLETPAYRSGRYVMPIEKGIHHFHCWLQQTLK.

Residues 1–60 constitute a chloroplast transit peptide; it reads MMAASASATTMLLKYPTTVCGIPNPSSNNNNDPSNNIVSIPQNTTNPTLKSRTPNKITTN. A compositionally biased stretch (low complexity) spans 24–41; that stretch reads NPSSNNNNDPSNNIVSIP. The tract at residues 24 to 54 is disordered; that stretch reads NPSSNNNNDPSNNIVSIPQNTTNPTLKSRTP. Residues 42–54 show a composition bias toward polar residues; the sequence is QNTTNPTLKSRTP. The region spanning 120–227 is the Rieske domain; it reads WQVAGISDQI…VAVWGPFVLI (108 aa). The [2Fe-2S] cluster site is built by Cys-162, His-164, Cys-181, and His-184. The Fe cation site is built by His-287 and His-292.

As to quaternary structure, homotrimer or homodimer. Requires [2Fe-2S] cluster as cofactor. It depends on Fe cation as a cofactor. Mg(2+) serves as cofactor. Expressed in leaves.

It is found in the plastid. The protein localises to the chloroplast stroma. The catalysed reaction is choline + 2 reduced [2Fe-2S]-[ferredoxin] + O2 + 2 H(+) = betaine aldehyde hydrate + 2 oxidized [2Fe-2S]-[ferredoxin] + H2O. It participates in amine and polyamine biosynthesis; betaine biosynthesis via choline pathway; betaine aldehyde from choline (monooxygenase route): step 1/1. Catalyzes the first step of the osmoprotectant glycine betaine synthesis. The sequence is that of Choline monooxygenase, chloroplastic (CMO) from Spinacia oleracea (Spinach).